We begin with the raw amino-acid sequence, 134 residues long: Small ribosomal subunit protein uS8c (134 aa).

This sequence belongs to the universal ribosomal protein uS8 family. In terms of assembly, part of the 30S ribosomal subunit.

The protein localises to the plastid. The protein resides in the chloroplast. Functionally, one of the primary rRNA binding proteins, it binds directly to 16S rRNA central domain where it helps coordinate assembly of the platform of the 30S subunit. The sequence is that of Small ribosomal subunit protein uS8c (rps8) from Eucalyptus globulus subsp. globulus (Tasmanian blue gum).